Reading from the N-terminus, the 345-residue chain is 4-hydroxy-2-oxovalerate aldolase 1 (345 aa).

Positions 9 to 261 (IRVTDTSLRD…RTGIDFFAIA (253 aa)) constitute a Pyruvate carboxyltransferase domain. A substrate-binding site is contributed by 17–18 (RD). Asp-18 contributes to the Mn(2+) binding site. His-21 acts as the Proton acceptor in catalysis. Substrate contacts are provided by Ser-171 and His-200. His-200 and His-202 together coordinate Mn(2+). Tyr-291 is a binding site for substrate.

This sequence belongs to the 4-hydroxy-2-oxovalerate aldolase family.

The catalysed reaction is (S)-4-hydroxy-2-oxopentanoate = acetaldehyde + pyruvate. The protein is 4-hydroxy-2-oxovalerate aldolase 1 of Nocardia farcinica (strain IFM 10152).